We begin with the raw amino-acid sequence, 880 residues long: Calcium-transporting ATPase lmo0841 (880 aa).

4 helical membrane-spanning segments follow: residues 47-67 (LWKLFLETFKDPMVIVLVIAA), 68-88 (LVQLVLGEVVESLIIFLVLIV), 243-263 (LGLGILALCVLIFAVEAGRVL), and 271-291 (MATAILNAFMFAVAVAVAAIP). V287, A288, I290, and E292 together coordinate Ca(2+). Residue D334 is the 4-aspartylphosphate intermediate of the active site. 5 helical membrane-spanning segments follow: residues 681-701 (IAYLFAGNLGAIIAILFALVL), 707-727 (FTALQLLFINLVNDSLPAIAL), 756-776 (AVISRGVLIGIAVIISQYIGM), 819-839 (YVIGAVLLCFVLYGITVLPGA), and 854-874 (WSIAAGLALAAVVMMEIIKVV). Ca(2+)-binding residues include N716 and D720.

The protein belongs to the cation transport ATPase (P-type) (TC 3.A.3) family. Type IIA subfamily.

It is found in the cell membrane. The enzyme catalyses Ca(2+)(in) + ATP + H2O = Ca(2+)(out) + ADP + phosphate + H(+). Phosphorylation is inhibited by EGTA and vanadate. ATPase activity is stimulated by Sr(2+). Inhibited by very high concentrations of cyclopiazonic acid (CPA). In terms of biological role, catalyzes the hydrolysis of ATP coupled with the transport of calcium. The transport is electrogenic with a probable ATP:Ca(2+):H(+) stoichiometry of 1:1:1. May have an important role in survival of the bacterium when stressed by a combination of a high calcium concentration and alkaline pH. The polypeptide is Calcium-transporting ATPase lmo0841 (Listeria monocytogenes serovar 1/2a (strain ATCC BAA-679 / EGD-e)).